A 159-amino-acid chain; its full sequence is UPF0262 protein Dshi_0980 (159 aa).

It belongs to the UPF0262 family.

The sequence is that of UPF0262 protein Dshi_0980 from Dinoroseobacter shibae (strain DSM 16493 / NCIMB 14021 / DFL 12).